The chain runs to 109 residues: UPF0060 membrane protein HEAR0108 (109 aa).

A run of 4 helical transmembrane segments spans residues 7–27, 33–53, 63–83, and 87–107; these read VALFVVTAIAEIVGCYLPYLW, SIWLLLPAALSLALFAWLLSL, AAYGGIYVAVALGWLWLVDGI, and NWDVAGVVFTFIGMGIIMFAP.

The protein belongs to the UPF0060 family.

It is found in the cell inner membrane. In Herminiimonas arsenicoxydans, this protein is UPF0060 membrane protein HEAR0108.